The primary structure comprises 293 residues: Histamine N-methyltransferase (293 aa).

E28 is a substrate binding site. G60, E89, Q94, S120, and I142 together coordinate S-adenosyl-L-methionine. Position 283 (N283) interacts with substrate.

Belongs to the class I-like SAM-binding methyltransferase superfamily. HNMT family. Monomer.

The protein resides in the cytoplasm. The enzyme catalyses histamine + S-adenosyl-L-methionine = N(tau)-methylhistamine + S-adenosyl-L-homocysteine + H(+). Its function is as follows. Inactivates histamine by N-methylation. Plays an important role in degrading histamine and in regulating the airway response to histamine. This is Histamine N-methyltransferase (hnmt) from Xenopus tropicalis (Western clawed frog).